The sequence spans 340 residues: 4-dimethylallyltryptophan N-methyltransferase ifgB (340 aa).

The protein belongs to the methyltransferase superfamily. Homodimer.

The enzyme catalyses 4-(3-methylbut-2-enyl)-L-tryptophan + S-adenosyl-L-methionine = 4-(3-methylbut-2-enyl)-L-abrine + S-adenosyl-L-homocysteine + H(+). Its pathway is alkaloid biosynthesis; ergot alkaloid biosynthesis. Functionally, 4-dimethylallyltryptophan N-methyltransferase; part of the gene cluster that mediates the biosynthesis of isofumigaclavines, fungal ergot alkaloids. The tryptophan dimethylallyltransferase ifgA catalyzes the first step of ergot alkaloid biosynthesis by condensing dimethylallyl diphosphate (DMAP) and tryptophan to form 4-dimethylallyl-L-tryptophan. The second step is catalyzed by the methyltransferase ifgB that methylates 4-dimethylallyl-L-tryptophan in the presence of S-adenosyl-L-methionine, resulting in the formation of N-methyl-dimethylallyl-L-tryptophan. The catalase ifgD and the FAD-dependent oxidoreductase ifgC then transform N-methyl-dimethylallyl-L-tryptophan to chanoclavine-I which is further oxidized by ifgE in the presence of NAD(+), resulting in the formation of chanoclavine-I aldehyde. The chanoclavine-I aldehyde reductases ifgG and/or fgaOx3 reduce chanoclavine-I aldehyde to dihydrochanoclavine-I aldehyde that spontaneously dehydrates to form 6,8-dimethyl-6,7-didehydroergoline. The festuclavine dehydrogenases ifgF1 and/or ifgF2 then catalyze the reduction of 6,8-dimethyl-6,7-didehydroergoline to form festuclavine. Hydrolysis of festuclavine by a yet undetermined cytochrome P450 monooxygenase (called ifgH) then leads to the formation of isofumigaclavine B which is in turn acetylated by ifgI to isofumigaclavine A. Penicillium roqueforti has interestingly at least two sets of genes for the consumption of chanoclavine-I aldehyde on three different loci, the OYEs ifgG/fgaOx3 and the festuclavine synthase homologs ifgF1/ifgF2. The reason for the duplication of these genes is unclear, probably to ensure the conversion of chanoclavine-I aldehyde by differential gene expression under various environmental conditions. In Penicillium roqueforti (strain FM164), this protein is 4-dimethylallyltryptophan N-methyltransferase ifgB.